Reading from the N-terminus, the 130-residue chain is uncharacterized protein (130 aa).

This is an uncharacterized protein from Enterobacteria phage T4 (Bacteriophage T4).